Consider the following 56-residue polypeptide: Small ribosomal subunit protein uS14z/uS14y/uS14x (56 aa).

Cys-21, Cys-24, Cys-39, and Cys-42 together coordinate Zn(2+).

It belongs to the universal ribosomal protein uS14 family. Zn(2+) serves as cofactor.

In Arabidopsis thaliana (Mouse-ear cress), this protein is Small ribosomal subunit protein uS14z/uS14y/uS14x (RPS29A).